The chain runs to 300 residues: MRVIPLASESLGVRSLATFVEAGGIKILIDPGVALGPKRYGLPPAKIELETLQKMRRKIQGYARRADVVTISHYHYDHHTPFFEGLYESSSEEYAREIYAGKLLLIKHPRENINFSQRKRAWAFLKNAEPIARRIEFADGRAFDLGGVTLEFSPAVPHGSEGSRLGFVVMVLIDDGSERIIHASDIQLLNRKAVEWIIEKNPDLLITGGPPTYLGKRAEGSWETGIKNLNEIIRETNAEIILDHHIVRDKRYPEFFDELEKRPKTFAGFLKVEDKPLEAYRRELHKRERGESVELPFRVG.

Belongs to the UPF0282 family.

The chain is UPF0282 protein TGAM_0379 from Thermococcus gammatolerans (strain DSM 15229 / JCM 11827 / EJ3).